The following is a 155-amino-acid chain: Antitoxin HicB 1 (155 aa).

Positions 99–153 constitute an HTH cro/C1-type domain; the sequence is MLNAFLDSKLTQIELANRMGVKKQEVTRIFDLRHSTKIDTVGKVASAIGHQLTLS. The H-T-H motif DNA-binding region spans 110–129; it reads QIELANRMGVKKQEVTRIFD.

Belongs to the HicB antitoxin family. As to quaternary structure, probably forms a complex with the probable mRNA interferase HicA1 (its cognate toxin); when complexed with HicA 1 inhibits the toxin activity.

Functionally, antitoxin component of a type II toxin-antitoxin (TA) system. Functions as an mRNA interferase antitoxin preventing effects of the HicA 1 toxin. The protein is Antitoxin HicB 1 (hicB1) of Photorhabdus laumondii subsp. laumondii (strain DSM 15139 / CIP 105565 / TT01) (Photorhabdus luminescens subsp. laumondii).